Here is a 218-residue protein sequence, read N- to C-terminus: Flagellar calcium-binding protein TB-24 (218 aa).

A disordered region spans residues 1–27 (MGCSASKDTTNSKDGAASKGGKDGKTT). EF-hand domains follow at residues 48–83 (ESKS…ILKL), 84–119 (DEFT…LVEF), 130–165 (YDIF…LKEW), and 167–202 (VDIT…KKLQ). Ca(2+)-binding residues include aspartate 61, asparagine 63, threonine 65, lysine 67, and glutamate 72. The Ca(2+) site is built by aspartate 143, aspartate 145, serine 147, glutamate 154, aspartate 180, asparagine 182, serine 184, and glutamate 191.

It belongs to the calflagin family.

The protein resides in the cell projection. Its subcellular location is the cilium. It localises to the flagellum. In terms of biological role, may contribute to the rapid motility of the trypanosomes, playing a role either in flagellar structure or in calcium metabolism. Could alternate between a GDP-bound inactive form to a calcium/GTP-bound active form. The polypeptide is Flagellar calcium-binding protein TB-24 (Trypanosoma brucei brucei).